Consider the following 222-residue polypeptide: Ras-related protein RabT1 (222 aa).

37–44 (GDNKTGKS) contacts GTP. The short motif at 59–66 (VSSIGVDF) is the Effector region element. GTP is bound by residues 85–89 (DVNSC) and 145–148 (NKCD). Residue Cys219 is modified to Cysteine methyl ester. A lipid anchor (S-geranylgeranyl cysteine) is attached at Cys219. The propeptide at 220-222 (NIL) is removed in mature form.

Belongs to the small GTPase superfamily. Rab family.

Its subcellular location is the cell membrane. The protein is Ras-related protein RabT1 (rabT1) of Dictyostelium discoideum (Social amoeba).